Consider the following 331-residue polypeptide: Ketol-acid reductoisomerase (NADP(+)) (331 aa).

One can recognise a KARI N-terminal Rossmann domain in the interval 1 to 182; that stretch reads MATLYYDTDA…GGTRAGILET (182 aa). Residues 25 to 28, Ser51, Ser53, and 83 to 86 contribute to the NADP(+) site; these read YGSQ and DEFQ. The active site involves His108. NADP(+) is bound at residue Gly134. The KARI C-terminal knotted domain maps to 183-328; it reads NFKEETETDL…KGLRAMFSWL (146 aa). Positions 191, 195, 227, and 231 each coordinate Mg(2+). Substrate is bound at residue Ser252.

It belongs to the ketol-acid reductoisomerase family. It depends on Mg(2+) as a cofactor.

The enzyme catalyses (2R)-2,3-dihydroxy-3-methylbutanoate + NADP(+) = (2S)-2-acetolactate + NADPH + H(+). It carries out the reaction (2R,3R)-2,3-dihydroxy-3-methylpentanoate + NADP(+) = (S)-2-ethyl-2-hydroxy-3-oxobutanoate + NADPH + H(+). It functions in the pathway amino-acid biosynthesis; L-isoleucine biosynthesis; L-isoleucine from 2-oxobutanoate: step 2/4. It participates in amino-acid biosynthesis; L-valine biosynthesis; L-valine from pyruvate: step 2/4. Functionally, involved in the biosynthesis of branched-chain amino acids (BCAA). Catalyzes an alkyl-migration followed by a ketol-acid reduction of (S)-2-acetolactate (S2AL) to yield (R)-2,3-dihydroxy-isovalerate. In the isomerase reaction, S2AL is rearranged via a Mg-dependent methyl migration to produce 3-hydroxy-3-methyl-2-ketobutyrate (HMKB). In the reductase reaction, this 2-ketoacid undergoes a metal-dependent reduction by NADPH to yield (R)-2,3-dihydroxy-isovalerate. The polypeptide is Ketol-acid reductoisomerase (NADP(+)) (Synechococcus sp. (strain RCC307)).